The primary structure comprises 370 residues: Cyanuric acid amidohydrolase (370 aa).

The tract at residues 1–106 (MRTTSVGVFK…TVFTRREVER (106 aa)) is RU A. Substrate-binding positions include arginine 54 and 85-86 (SG). Residues 115-251 (RLSIGMAHTR…NVVIVLGNSA (137 aa)) form an RU B region. Residue lysine 165 is part of the active site. Residues arginine 197 and 234 to 235 (SA) contribute to the substrate site. Serine 234 serves as the catalytic Nucleophile. Positions 257–370 (FEIGHAVMND…PVAVIARLSD (114 aa)) are RU C. Glutamate 302 is a binding site for Mg(2+). Residues arginine 329 and 348–349 (SG) each bind substrate. Mg(2+) is bound by residues alanine 351, glutamine 354, glycine 355, proline 356, and glycine 359.

This sequence belongs to the cyclic amide hydrolase (CyAH) family. As to quaternary structure, homotetramer.

The catalysed reaction is cyanurate + H2O = 1-carboxybiuret + H(+). It functions in the pathway xenobiotic degradation; atrazine degradation; biuret from cyanurate: step 1/1. With respect to regulation, inhibited by barbituric acid. Its function is as follows. Responsible for the hydrolysis of cyanuric acid, an intermediate formed during catabolism of s-triazine based compounds in herbicides such as atrazine and polymers such as melamine. Catalyzes the hydrolytic opening of the s-triazine ring of cyanuric acid (2,4,6-trihydroxy-s-triazine) to yield carbon dioxide and carboxybiuret, which spontaneously decarboxylates to biuret. This chain is Cyanuric acid amidohydrolase, found in Bradyrhizobium diazoefficiens (strain JCM 10833 / BCRC 13528 / IAM 13628 / NBRC 14792 / USDA 110).